A 69-amino-acid chain; its full sequence is ATP synthase F(0) complex subunit e, mitochondrial (69 aa).

Position 34 is an N6-acetyllysine (K34). S66 carries the phosphoserine modification.

This sequence belongs to the ATPase e subunit family. Component of the ATP synthase complex composed at least of ATP5F1A/subunit alpha, ATP5F1B/subunit beta, ATP5MC1/subunit c (homooctomer), MT-ATP6/subunit a, MT-ATP8/subunit 8, ATP5ME/subunit e, ATP5MF/subunit f, ATP5MG/subunit g, ATP5MK/subunit k, ATP5MJ/subunit j, ATP5F1C/subunit gamma, ATP5F1D/subunit delta, ATP5F1E/subunit epsilon, ATP5PF/subunit F6, ATP5PB/subunit b, ATP5PD/subunit d, ATP5PO/subunit OSCP. ATP synthase complex consists of a soluble F(1) head domain (subunits alpha(3) and beta(3)) - the catalytic core - and a membrane F(0) domain - the membrane proton channel (subunits c, a, 8, e, f, g, k and j). These two domains are linked by a central stalk (subunits gamma, delta, and epsilon) rotating inside the F1 region and a stationary peripheral stalk (subunits F6, b, d, and OSCP).

The protein localises to the mitochondrion. It localises to the mitochondrion inner membrane. Subunit e, of the mitochondrial membrane ATP synthase complex (F(1)F(0) ATP synthase or Complex V) that produces ATP from ADP in the presence of a proton gradient across the membrane which is generated by electron transport complexes of the respiratory chain. ATP synthase complex consist of a soluble F(1) head domain - the catalytic core - and a membrane F(1) domain - the membrane proton channel. These two domains are linked by a central stalk rotating inside the F(1) region and a stationary peripheral stalk. During catalysis, ATP synthesis in the catalytic domain of F(1) is coupled via a rotary mechanism of the central stalk subunits to proton translocation. In vivo, can only synthesize ATP although its ATP hydrolase activity can be activated artificially in vitro. Part of the complex F(0) domain. The polypeptide is ATP synthase F(0) complex subunit e, mitochondrial (Homo sapiens (Human)).